Consider the following 209-residue polypeptide: Large ribosomal subunit protein bL25 (209 aa).

Disordered stretches follow at residues 1–20 (MSKSYTLKAEKRERVGKGSS) and 190–209 (LDVSDETSEQEKDEGETQTS). Over residues 8–20 (KAEKRERVGKGSS) the composition is skewed to basic and acidic residues. A compositionally biased stretch (acidic residues) spans 192-209 (VSDETSEQEKDEGETQTS).

This sequence belongs to the bacterial ribosomal protein bL25 family. CTC subfamily. In terms of assembly, part of the 50S ribosomal subunit; part of the 5S rRNA/L5/L18/L25 subcomplex. Contacts the 5S rRNA. Binds to the 5S rRNA independently of L5 and L18.

In terms of biological role, this is one of the proteins that binds to the 5S RNA in the ribosome where it forms part of the central protuberance. The protein is Large ribosomal subunit protein bL25 of Bartonella tribocorum (strain CIP 105476 / IBS 506).